The chain runs to 252 residues: uncharacterized protein (252 aa).

A run of 10 repeats spans residues 68 to 82, 83 to 97, 98 to 112, 113 to 127, 128 to 142, 143 to 157, 158 to 172, 173 to 187, 188 to 202, and 203 to 217. A 13 X 15 AA tandem repeats region spans residues 68 to 246; the sequence is TYNQSQNVCP…LIDTYNQSQN (179 aa). An 11; truncated repeat occupies 218–230; it reads TYNQSQNVCPQDL. The 12; truncated repeat unit spans residues 231-239; that stretch reads NVYTQDLID. Residues 240 to 246 form a 13; truncated repeat; the sequence is TYNQSQN.

Its function is as follows. A protein probably derived from this gene is found in cuboidal crystalline inclusions, but is not toxic even when coexpressed with upstream ORF1. The protein runs anomalously as a 50 kDa band in gels. This is an uncharacterized protein from Bacillus thuringiensis subsp. kurstaki.